A 317-amino-acid polypeptide reads, in one-letter code: UV DNA damage endonuclease (317 aa).

It belongs to the uve1/UvsE family.

In terms of biological role, component in a DNA repair pathway. Removal of UV LIGHT damaged nucleotides. Recognizes pyrimidine dimers and cleave a phosphodiester bond immediately 5' to the lesion. This Bacillus cereus (strain 03BB102) protein is UV DNA damage endonuclease.